The sequence spans 66 residues: MKPGIHPEYKKVIVRCACGNEFESGSVKDELRVEICSECHPFFTGRQKFVSAAGRVDKFNKKYGLK.

Zn(2+) contacts are provided by Cys16, Cys18, Cys36, and Cys39.

This sequence belongs to the bacterial ribosomal protein bL31 family. Type A subfamily. Part of the 50S ribosomal subunit. Zn(2+) serves as cofactor.

In terms of biological role, binds the 23S rRNA. The chain is Large ribosomal subunit protein bL31 from Geobacillus sp. (strain WCH70).